The sequence spans 1040 residues: Multidrug resistance protein MdtB (1040 aa).

The next 12 helical transmembrane spans lie at 25–45 (LLMV…PVAA), 342–362 (DTQF…YLFL), 369–389 (IIPG…MVFL), 396–416 (LTLM…IVVI), 440–460 (IGFT…PLLF), 472–492 (FAVT…TLTP), 537–557 (WLTL…WVFI), 863–883 (LGST…VLGV), 888–908 (FIHP…ALLA), 911–931 (IAGS…IGIV), 967–987 (PILM…LSTG), and 998–1018 (IGMV…TPVI).

The protein belongs to the resistance-nodulation-cell division (RND) (TC 2.A.6) family. MdtB subfamily. In terms of assembly, part of a tripartite efflux system composed of MdtA, MdtB and MdtC. MdtB forms a heteromultimer with MdtC.

The protein resides in the cell inner membrane. In Citrobacter koseri (strain ATCC BAA-895 / CDC 4225-83 / SGSC4696), this protein is Multidrug resistance protein MdtB.